Here is a 367-residue protein sequence, read N- to C-terminus: Alanine racemase (367 aa).

The Proton acceptor; specific for D-alanine role is filled by Lys-40. Position 40 is an N6-(pyridoxal phosphate)lysine (Lys-40). Arg-136 lines the substrate pocket. Tyr-263 functions as the Proton acceptor; specific for L-alanine in the catalytic mechanism. Residue Met-310 coordinates substrate.

The protein belongs to the alanine racemase family. Pyridoxal 5'-phosphate is required as a cofactor.

It carries out the reaction L-alanine = D-alanine. Its pathway is amino-acid biosynthesis; D-alanine biosynthesis; D-alanine from L-alanine: step 1/1. Catalyzes the interconversion of L-alanine and D-alanine. May also act on other amino acids. This Streptococcus pneumoniae (strain 70585) protein is Alanine racemase (alr).